The primary structure comprises 377 residues: Protein-tyrosine sulfotransferase 2 (377 aa).

Topologically, residues 1 to 8 are cytoplasmic; sequence MRLSVRRV. Residues 9–25 form a helical; Signal-anchor for type II membrane protein membrane-spanning segment; sequence LLAAGCALVLVLAVQLG. The Lumenal segment spans residues 26–377; that stretch reads QQVLECRAVL…NSTSSHLGSS (352 aa). 78–82 lines the 3'-phosphoadenylyl sulfate pocket; that stretch reads RSGTT. Residues Cys96 and Cys156 are joined by a disulfide bond. Glu99 (proton donor/acceptor) is an active-site residue. An interaction with peptide substrate region spans residues 101–105; it reads RIIPR. Positions 183, 191, and 195 each coordinate 3'-phosphoadenylyl sulfate. Cys225 and Cys233 are disulfide-bonded. 3'-phosphoadenylyl sulfate is bound by residues Tyr238, 285 to 294, and Lys300; that span reads STDQVIKPVN. N-linked (GlcNAc...) asparagine glycosylation is found at Asn343 and Asn368.

Belongs to the protein sulfotransferase family. As to quaternary structure, homodimer. Can also form heterodimers with TPST1. Post-translationally, N-glycosylated. Widely expressed.

It localises to the golgi apparatus membrane. It catalyses the reaction L-tyrosyl-[protein] + 3'-phosphoadenylyl sulfate = O-sulfo-L-tyrosine-[protein] + adenosine 3',5'-bisphosphate + H(+). Functionally, catalyzes the O-sulfation of tyrosine residues within acidic motifs of polypeptides, using 3'-phosphoadenylyl sulfate (PAPS) as cosubstrate. The chain is Protein-tyrosine sulfotransferase 2 (TPST2) from Homo sapiens (Human).